The sequence spans 274 residues: MVIQLYKTYTPSTRNGTVNGQVKSTRGKNLIYGQHRCGKGRNARGIITARHRGGGHKRLYRKIDFRRNEKDIYGRIVTIEYDPNRNAYICLIHYGNGEKRYILHPRGAIIGDSIVSGTEVSIKIGNALPLTEMPLGTAIHNIEITLGKGGQLARAAGAVAKLIAKEGKSATIKLPSGEVRLISKNCSATVGQVGNVGVNQKSLGRAGAKRWLGKRPVVRGVVMNPVDHPHGGGEGRAPIGRKKPTTPWGYPALGRKSRKRNKYSEKFILRHRSK.

The interval 224–274 (NPVDHPHGGGEGRAPIGRKKPTTPWGYPALGRKSRKRNKYSEKFILRHRSK) is disordered.

Belongs to the universal ribosomal protein uL2 family. In terms of assembly, part of the 50S ribosomal subunit.

It localises to the plastid. Its subcellular location is the chloroplast. The sequence is that of Large ribosomal subunit protein uL2c (rpl2) from Ipomoea purpurea (Common morning glory).